Here is a 91-residue protein sequence, read N- to C-terminus: Cytochrome b-c1 complex subunit 10, mitochondrial (91 aa).

Residues methionine 1–lysine 34 are Mitochondrial matrix-facing. The helical transmembrane segment at glutamine 35 to alanine 58 threads the bilayer. The Mitochondrial intermembrane portion of the chain corresponds to serine 59–phenylalanine 91.

Belongs to the UQCR11/QCR10 family. Component of the ubiquinol-cytochrome c oxidoreductase (cytochrome b-c1 complex, complex III, CIII), a multisubunit enzyme composed of 10 subunits. The complex is composed of 3 respiratory subunits cytochrome b (cob), cytochrome c1 (cyt-1) and Rieske protein (fes-1), 2 core protein subunits pep and ucr-1, and 5 low-molecular weight protein subunits qcr6, qcr7, qcr8, qcr9 and probably NCU16844/qcr10. The complex exists as an obligatory dimer and forms supercomplexes (SCs) in the inner mitochondrial membrane with NADH-ubiquinone oxidoreductase (complex I, CI) and cytochrome c oxidase (complex IV, CIV), resulting in different assemblies (supercomplexes SCI(1)III(2), SCIII(2)IV(1) and SCIII(2)IV(2) as well as higher order I(x)III(y)IV(z) megacomplexes).

It localises to the mitochondrion inner membrane. In terms of biological role, component of the ubiquinol-cytochrome c oxidoreductase, a multisubunit transmembrane complex that is part of the mitochondrial electron transport chain which drives oxidative phosphorylation. The respiratory chain contains 3 multisubunit complexes succinate dehydrogenase (complex II, CII), ubiquinol-cytochrome c oxidoreductase (cytochrome b-c1 complex, complex III, CIII) and cytochrome c oxidase (complex IV, CIV), that cooperate to transfer electrons derived from NADH and succinate to molecular oxygen, creating an electrochemical gradient over the inner membrane that drives transmembrane transport and the ATP synthase. The cytochrome b-c1 complex catalyzes electron transfer from ubiquinol to cytochrome c, linking this redox reaction to translocation of protons across the mitochondrial inner membrane, with protons being carried across the membrane as hydrogens on the quinol. In the process called Q cycle, 2 protons are consumed from the matrix, 4 protons are released into the intermembrane space and 2 electrons are passed to cytochrome c. In Neurospora crassa (strain ATCC 24698 / 74-OR23-1A / CBS 708.71 / DSM 1257 / FGSC 987), this protein is Cytochrome b-c1 complex subunit 10, mitochondrial.